Reading from the N-terminus, the 246-residue chain is Small ribosomal subunit protein uS2 (246 aa).

It belongs to the universal ribosomal protein uS2 family.

The sequence is that of Small ribosomal subunit protein uS2 from Burkholderia cenocepacia (strain ATCC BAA-245 / DSM 16553 / LMG 16656 / NCTC 13227 / J2315 / CF5610) (Burkholderia cepacia (strain J2315)).